Here is a 130-residue protein sequence, read N- to C-terminus: Small ribosomal subunit protein uS9 (130 aa).

This sequence belongs to the universal ribosomal protein uS9 family.

In Shewanella amazonensis (strain ATCC BAA-1098 / SB2B), this protein is Small ribosomal subunit protein uS9.